Reading from the N-terminus, the 61-residue chain is Large ribosomal subunit protein uL30 (61 aa).

This sequence belongs to the universal ribosomal protein uL30 family. As to quaternary structure, part of the 50S ribosomal subunit.

The chain is Large ribosomal subunit protein uL30 from Exiguobacterium sibiricum (strain DSM 17290 / CCUG 55495 / CIP 109462 / JCM 13490 / 255-15).